The primary structure comprises 795 residues: Delta-1-pyrroline-5-carboxylate synthase (795 aa).

Residues 1–361 form a glutamate 5-kinase region; that stretch reads MLRHMHRSGV…FFSEVKPAGP (361 aa). Residues S117, D223, and N246 each coordinate substrate. Residues 266-267 and 305-311 each bind ATP; these read SD and LGGMEAK. N6-succinyllysine occurs at positions 311, 347, and 550. Residues 362–795 form a gamma-glutamyl phosphate reductase region; it reads TVEQQGEMAR…NLPVPQRNFS (434 aa).

It in the N-terminal section; belongs to the glutamate 5-kinase family. This sequence in the C-terminal section; belongs to the gamma-glutamyl phosphate reductase family. As to quaternary structure, can form homodimers/multimers.

It is found in the mitochondrion matrix. The catalysed reaction is L-glutamate + ATP = L-glutamyl 5-phosphate + ADP. It catalyses the reaction L-glutamate 5-semialdehyde + phosphate + NADP(+) = L-glutamyl 5-phosphate + NADPH + H(+). It functions in the pathway amino-acid biosynthesis; L-proline biosynthesis; L-glutamate 5-semialdehyde from L-glutamate: step 1/2. Its pathway is amino-acid biosynthesis; L-proline biosynthesis; L-glutamate 5-semialdehyde from L-glutamate: step 2/2. Its activity is regulated as follows. Isoform Short: Inhibited by L-ornithine with a Ki of approximately 0.25 mm. Isoform Long: Insensitive to ornithine inhibition. Thus, the two amino acid insert in the long isoform abolishes feedback inhibition of P5CS activity by L-ornithine. Its function is as follows. Bifunctional enzyme that converts glutamate to glutamate 5-semialdehyde, an intermediate in the biosynthesis of proline, ornithine and arginine. This is Delta-1-pyrroline-5-carboxylate synthase (Aldh18a1) from Mus musculus (Mouse).